Here is a 347-residue protein sequence, read N- to C-terminus: Major capsid protein (347 aa).

It belongs to the baculoviridae major capsid protein family.

The protein resides in the virion. Its function is as follows. Most abundant structural protein of the nucleocapsid produced during the infection cycle. The monomers are arranged in stacked rings around the nucleoprotein core. This is Major capsid protein (P39) from Autographa californica nuclear polyhedrosis virus (AcMNPV).